The sequence spans 323 residues: Homocysteine S-methyltransferase 1 (323 aa).

The Hcy-binding domain occupies 3–317 (VLEDLVARAG…STIRAVSKIL (315 aa)). Residues cysteine 235, cysteine 302, and cysteine 303 each contribute to the Zn(2+) site.

In terms of assembly, monomer. The cofactor is Zn(2+).

The enzyme catalyses S-methyl-L-methionine + L-homocysteine = 2 L-methionine + H(+). In terms of biological role, catalyzes methyl transfer from S-methylmethionine (SMM) to adenosyl-L-homocysteine (AdoMet). SMM degradation (by HMT-1, HMT-2, HMT-3 and HMT-4) and biosynthesis (by MMT1) constitute the SMM cycle in plants, which is probably required to achieve short term control of AdoMet level. The sequence is that of Homocysteine S-methyltransferase 1 (HMT-1) from Zea mays (Maize).